We begin with the raw amino-acid sequence, 235 residues long: Phosphatidylserine decarboxylase proenzyme (235 aa).

S204 functions as the Schiff-base intermediate with substrate; via pyruvic acid in the catalytic mechanism. At S204 the chain carries Pyruvic acid (Ser); by autocatalysis.

Belongs to the phosphatidylserine decarboxylase family. PSD-A subfamily. Heterodimer of a large membrane-associated beta subunit and a small pyruvoyl-containing alpha subunit. It depends on pyruvate as a cofactor. Post-translationally, is synthesized initially as an inactive proenzyme. Formation of the active enzyme involves a self-maturation process in which the active site pyruvoyl group is generated from an internal serine residue via an autocatalytic post-translational modification. Two non-identical subunits are generated from the proenzyme in this reaction, and the pyruvate is formed at the N-terminus of the alpha chain, which is derived from the carboxyl end of the proenzyme. The post-translation cleavage follows an unusual pathway, termed non-hydrolytic serinolysis, in which the side chain hydroxyl group of the serine supplies its oxygen atom to form the C-terminus of the beta chain, while the remainder of the serine residue undergoes an oxidative deamination to produce ammonia and the pyruvoyl prosthetic group on the alpha chain.

It is found in the cell membrane. The catalysed reaction is a 1,2-diacyl-sn-glycero-3-phospho-L-serine + H(+) = a 1,2-diacyl-sn-glycero-3-phosphoethanolamine + CO2. It participates in phospholipid metabolism; phosphatidylethanolamine biosynthesis; phosphatidylethanolamine from CDP-diacylglycerol: step 2/2. Functionally, catalyzes the formation of phosphatidylethanolamine (PtdEtn) from phosphatidylserine (PtdSer). The polypeptide is Phosphatidylserine decarboxylase proenzyme (Mycobacterium sp. (strain KMS)).